The following is a 407-amino-acid chain: MNSVDIGRCRKRIVQYIWDPEPRNDEEPDASIWCLGVEYAPQPQKITANTTPGKLGNYQDELEAGTSKIDDVTAHGWPEAFVSDFESKIWMTYRSDFPPIPRLDNDEANHPMTLTVRIRTQLMDPQGFTSDTGWGCMIRSGQSLLANAMLTLCLGRDWRRGDKAEEEARLLSLFADHPDAPLSIHRFVKYGAESCGKHPGEWFGPSATARCIEALSAQCGNIAPRVYVTNDTSDVYEDSFLRVARSGSGSIQPTLILLGTRLGIDNVTPVYWDGLKAVLQLPQSVGIAGGRPSASHYFIGTQGPHFFYLDPHTTRPAVPYSIDGRLLSKTEISTYHTRRLRRIHIQDMDPSMLIGFLVRNEDDWEDWKGRVGSVVGKQIIHVFKGEEATYNQGRRGALDEVEALDDA.

The Nucleophile role is filled by Cys136. Catalysis depends on residues Asp310 and His312.

It belongs to the peptidase C54 family.

It localises to the cytoplasm. The protein resides in the nucleus. The protein localises to the preautophagosomal structure. The catalysed reaction is [protein]-C-terminal L-amino acid-glycyl-phosphatidylethanolamide + H2O = [protein]-C-terminal L-amino acid-glycine + a 1,2-diacyl-sn-glycero-3-phosphoethanolamine. Functionally, cysteine protease that is required for autophagy. Plays a key role in cytoplasm to vacuole transport (Cvt) and autophagy by mediating both proteolytic activation and delipidation of atg8. The protease activity is required for proteolytic activation of atg8 by the cleavage of the C-terminal amino acid of atg8 to reveal a C-terminal glycine. Azg8 ubiquitin-like activity requires the exposure of the glycine at the C-terminus for its conjugation to phosphatidylethanolamine (PE) and its insertion to membranes, which is necessary for autophagy. The atg8-PE conjugate mediates tethering between adjacent membranes and stimulates membrane hemifusion, leading to expansion of the autophagosomal membrane during autophagy. In addition to the protease activity, also catalyzes deconjugation of PE-conjugated forms of atg8 during macroautophagy since atg8 delipidation is required to release the protein from membranes, which facilitates multiple events during macroautophagy, and especially for efficient autophagosome biogenesis, the assembly of atg99-containing tubulovesicular clusters into phagophores/autophagosomes, and for the disassembly of PAS-associated ATG components. Atg8 delipidation by atg4 also recycles atg8-PE generated on inappropriate membranes to maintain a reservoir of unlipidated atg8 that is required for autophagosome formation at the PAS. The polypeptide is Probable cysteine protease atg4 (Aspergillus oryzae (strain ATCC 42149 / RIB 40) (Yellow koji mold)).